The sequence spans 171 residues: Photosystem I assembly protein Ycf3 (171 aa).

3 TPR repeats span residues 35 to 68, 72 to 105, and 120 to 153; these read AFTY…EIDP, SYIL…NPSL, and GEQA…APSN.

This sequence belongs to the Ycf3 family.

It is found in the plastid. Its subcellular location is the chloroplast thylakoid membrane. In terms of biological role, essential for the assembly of the photosystem I (PSI) complex. May act as a chaperone-like factor to guide the assembly of the PSI subunits. The chain is Photosystem I assembly protein Ycf3 from Angiopteris evecta (Mule's foot fern).